The primary structure comprises 400 residues: Elongation factor Tu (400 aa).

The tr-type G domain maps to 10-209 (KPHVNIGTIG…VVDKYIPTPQ (200 aa)). A G1 region spans residues 19 to 26 (GHVDHGKT). A GTP-binding site is contributed by 19–26 (GHVDHGKT). Mg(2+) is bound at residue threonine 26. Residues 60–64 (GITIN) are G2. Residues 81-84 (DCPG) are G3. GTP contacts are provided by residues 81 to 85 (DCPGH) and 136 to 139 (NKVD). Residues 136–139 (NKVD) are G4. Residues 174–176 (SAL) are G5.

The protein belongs to the TRAFAC class translation factor GTPase superfamily. Classic translation factor GTPase family. EF-Tu/EF-1A subfamily. As to quaternary structure, monomer.

The protein resides in the cytoplasm. The enzyme catalyses GTP + H2O = GDP + phosphate + H(+). In terms of biological role, GTP hydrolase that promotes the GTP-dependent binding of aminoacyl-tRNA to the A-site of ribosomes during protein biosynthesis. The polypeptide is Elongation factor Tu (Caldicellulosiruptor saccharolyticus (strain ATCC 43494 / DSM 8903 / Tp8T 6331)).